The chain runs to 359 residues: Peptide chain release factor 1 (359 aa).

Glutamine 236 is modified (N5-methylglutamine). The disordered stretch occupies residues 288 to 308; the sequence is QDEQDAERKSTIGTGDRSERI. Positions 293–308 are enriched in basic and acidic residues; it reads AERKSTIGTGDRSERI.

It belongs to the prokaryotic/mitochondrial release factor family. Post-translationally, methylated by PrmC. Methylation increases the termination efficiency of RF1.

It localises to the cytoplasm. Functionally, peptide chain release factor 1 directs the termination of translation in response to the peptide chain termination codons UAG and UAA. This chain is Peptide chain release factor 1, found in Streptococcus uberis (strain ATCC BAA-854 / 0140J).